A 205-amino-acid chain; its full sequence is Gap junction epsilon-1 protein (205 aa).

Over 1–22 (MSLNYIKNFYEGCVKPPTVIGQ) the chain is Cytoplasmic. Residues 23–43 (FHTLFFGSVRMFFLGVLGFAV) form a helical membrane-spanning segment. The Extracellular portion of the chain corresponds to 44–74 (YGNEALHFSCDPDKREINLFCYNQFRPITPQ). Cystine bridges form between C53-C161 and C64-C147. A helical membrane pass occupies residues 75–95 (VFWALQLVIVLLPGAIFHLYA). The Cytoplasmic portion of the chain corresponds to 96-111 (ACKSINQDCILQKPVY). A helical membrane pass occupies residues 112 to 132 (TVIYVLSVLLRISLEVFAFWL). Over 133-170 (QIHLFGFQVKPIYLCDTESLGKKPNILKCMVPEHFEKT) the chain is Extracellular. The chain crosses the membrane as a helical span at residues 171-191 (IFLIAMYTFTVITMVLCVAEV). Residues 192-205 (FEIIFRRSCFLFKR) lie on the Cytoplasmic side of the membrane.

This sequence belongs to the connexin family. Beta-type (group I) subfamily. In terms of assembly, a connexon is composed of a hexamer of connexins. As to expression, highly expressed in lens, where it is mainly found in lens fibers and to a lesser extent in lens epithelium. Weakly expressed in retina. Not detected in other tissues tested.

Its subcellular location is the cell membrane. Mediates calcium-independent ATP release, suggesting activity as a hemichannel. Does not form functional gap junctions. May play a non-essential role in eye lens development. The sequence is that of Gap junction epsilon-1 protein from Mus musculus (Mouse).